Reading from the N-terminus, the 295-residue chain is MEKLRILICDGNTEADRASFKKFVGCAPSKQFESLLKNYNSQIRTEIAFPADPGPLMTLPLGAYDGILITGSNSHIYEAQPGNLRQIEFAQKAFASGTPMFGVCWGMQLAVVAAGGEVLPSRVADCSCETPFATGVELTSYGSGHPMHHSRTSGFDVFSFHSDEVTRLPGGAVVTARNRNFIQAVEIKHGRSTFWGVQYHPELSGWDQAGFLRESARSLVEDGSYETLNHVEHAAQAISMFKAGAQISEENLVHFEGVDTNSFEFRPLEILNWLDHLVIPTAKRKFGWGGGWLQK.

Positions Arg-5–Glu-221 constitute a Glutamine amidotransferase type-1 domain. The active-site Nucleophile is the Cys-104. Active-site residues include His-200 and Glu-202.

The enzyme catalyses gamma-L-glutamyl-L-alaninol + H2O = L-alaninol + L-glutamate. Functionally, involved in the degradation of isopropylamine, which is a constituent of the herbicides atrazine. Catalyzes the hydrolysis of gamma-glutamyl-L-alaninol (GALO) to L-alaninol and L-glutamate. It can also uses gamma-glutamyl-isopropylamide, gamma-glutamyl-ethylamide, L-glutamine, and gamma-glutamyl-p-nitroanilide. The chain is Gamma-glutamyl-L-1-hydroxyisopropylamide hydrolase (ipuF) from Pseudomonas sp.